We begin with the raw amino-acid sequence, 489 residues long: F-box/LRR-repeat protein 7 (489 aa).

Residues Met1–Ser31 show a composition bias toward low complexity. The segment at Met1–Ser76 is disordered. A compositionally biased stretch (polar residues) spans Thr32–Ser55. A compositionally biased stretch (low complexity) spans Ser64–Ser76. The region spanning Gly109–Ile155 is the F-box domain. LRR repeat units follow at residues Leu168–Gly193, Cys194–Gly219, Cys220–Gly245, Cys251–Asp279, Cys280–Arg305, Cys306–Asp331, Cys332–His357, Cys358–Gly383, Cys384–Lys409, Cys410–Ser435, and Cys436–Asp461.

This sequence belongs to the FBXL7 family. In terms of assembly, part of the SCF (SKP1-CUL1-F-box) E3 ubiquitin-protein ligase complex SCF(FBXL7).

It localises to the cytoplasm. It is found in the cytoskeleton. Its subcellular location is the microtubule organizing center. The protein localises to the centrosome. The protein operates within protein modification; protein ubiquitination. Its function is as follows. Substrate recognition component of a SCF (SKP1-CUL1-F-box protein) E3 ubiquitin-protein ligase complex which mediates the ubiquitination and subsequent proteasomal degradation of target proteins. This chain is F-box/LRR-repeat protein 7 (fbxl7), found in Danio rerio (Zebrafish).